We begin with the raw amino-acid sequence, 266 residues long: 2-hydroxyisocaproyl-CoA dehydratase activator (266 aa).

Residues 10-14 and 102-104 each bind ATP; these read STASK and GQD. [4Fe-4S] cluster is bound at residue Cys125. Residue Asp134 participates in ATP binding. Cys164 provides a ligand contact to [4Fe-4S] cluster. ATP is bound by residues Gly215 and Gln241.

This sequence belongs to the HadI activator family. In terms of assembly, homodimer. The cofactor is [4Fe-4S] cluster.

Involved in the reductive branch of L-leucine fermentation. Required for the activation of (R)-2-hydroxyisocaproyl-CoA dehydratase. The reduced activator transfers one electron to the dehydratase concomitant with hydrolysis of ATP. This protein is extremely sensitive towards oxygen. The chain is 2-hydroxyisocaproyl-CoA dehydratase activator from Clostridioides difficile (Peptoclostridium difficile).